The chain runs to 150 residues: Large ribosomal subunit protein uL15 (150 aa).

The protein belongs to the universal ribosomal protein uL15 family. In terms of assembly, part of the 50S ribosomal subunit.

Binds to the 23S rRNA. The chain is Large ribosomal subunit protein uL15 from Anaplasma marginale (strain Florida).